The primary structure comprises 351 residues: Probable protein phosphatase 2C 8 (351 aa).

The segment at 1–63 (MLEKESDLTA…REAEEDKPSF (63 aa)) is disordered. Basic and acidic residues predominate over residues 54–63 (REAEEDKPSF). The PPM-type phosphatase domain maps to 74–348 (EADVAEDKGA…DNCTAIVIVF (275 aa)). Residues aspartate 114, glycine 115, aspartate 295, and aspartate 339 each coordinate Mn(2+).

It belongs to the PP2C family. Mg(2+) is required as a cofactor. The cofactor is Mn(2+).

The catalysed reaction is O-phospho-L-seryl-[protein] + H2O = L-seryl-[protein] + phosphate. It catalyses the reaction O-phospho-L-threonyl-[protein] + H2O = L-threonyl-[protein] + phosphate. The sequence is that of Probable protein phosphatase 2C 8 from Arabidopsis thaliana (Mouse-ear cress).